The primary structure comprises 362 residues: 3-dehydroquinate synthase (362 aa).

Residues 71 to 76 (DGEQNK), 105 to 109 (GVIGD), 129 to 130 (TT), K142, and K151 contribute to the NAD(+) site. The Zn(2+) site is built by E184, H247, and H264.

Belongs to the sugar phosphate cyclases superfamily. Dehydroquinate synthase family. Co(2+) serves as cofactor. Requires Zn(2+) as cofactor. NAD(+) is required as a cofactor.

Its subcellular location is the cytoplasm. It catalyses the reaction 7-phospho-2-dehydro-3-deoxy-D-arabino-heptonate = 3-dehydroquinate + phosphate. Its pathway is metabolic intermediate biosynthesis; chorismate biosynthesis; chorismate from D-erythrose 4-phosphate and phosphoenolpyruvate: step 2/7. Its function is as follows. Catalyzes the conversion of 3-deoxy-D-arabino-heptulosonate 7-phosphate (DAHP) to dehydroquinate (DHQ). The protein is 3-dehydroquinate synthase of Blochmanniella pennsylvanica (strain BPEN).